The sequence spans 271 residues: Regulatory protein RecX (271 aa).

It belongs to the RecX family.

It localises to the cytoplasm. In terms of biological role, modulates RecA activity. In Lactobacillus johnsonii (strain CNCM I-12250 / La1 / NCC 533), this protein is Regulatory protein RecX.